The primary structure comprises 179 residues: Cell division protein SepF (179 aa).

Residues 18–57 (EDSTVPYEKGNEPVFTPVNSSQEPDLPMNQPSQSAGAKDS) are disordered. Over residues 34-57 (PVNSSQEPDLPMNQPSQSAGAKDS) the composition is skewed to polar residues.

This sequence belongs to the SepF family. As to quaternary structure, homodimer. Interacts with FtsZ.

The protein localises to the cytoplasm. Functionally, cell division protein that is part of the divisome complex and is recruited early to the Z-ring. Probably stimulates Z-ring formation, perhaps through the cross-linking of FtsZ protofilaments. Its function overlaps with FtsA. The polypeptide is Cell division protein SepF (Streptococcus pneumoniae (strain Hungary19A-6)).